The primary structure comprises 466 residues: Ribulose bisphosphate carboxylase large chain (466 aa).

At lysine 4 the chain carries N6,N6,N6-trimethyllysine. Residues asparagine 113 and threonine 163 each coordinate substrate. Lysine 165 acts as the Proton acceptor in catalysis. A substrate-binding site is contributed by lysine 167. Mg(2+)-binding residues include lysine 191, aspartate 193, and glutamate 194. N6-carboxylysine is present on lysine 191. The active-site Proton acceptor is histidine 284. Positions 285, 317, and 369 each coordinate substrate.

The protein belongs to the RuBisCO large chain family. Type I subfamily. As to quaternary structure, heterohexadecamer of 8 large chains and 8 small chains; disulfide-linked. The disulfide link is formed within the large subunit homodimers. The cofactor is Mg(2+). Post-translationally, the disulfide bond which can form in the large chain dimeric partners within the hexadecamer appears to be associated with oxidative stress and protein turnover.

Its subcellular location is the plastid. The protein resides in the chloroplast. It carries out the reaction 2 (2R)-3-phosphoglycerate + 2 H(+) = D-ribulose 1,5-bisphosphate + CO2 + H2O. The enzyme catalyses D-ribulose 1,5-bisphosphate + O2 = 2-phosphoglycolate + (2R)-3-phosphoglycerate + 2 H(+). RuBisCO catalyzes two reactions: the carboxylation of D-ribulose 1,5-bisphosphate, the primary event in carbon dioxide fixation, as well as the oxidative fragmentation of the pentose substrate in the photorespiration process. Both reactions occur simultaneously and in competition at the same active site. This is Ribulose bisphosphate carboxylase large chain from Ruttya fruticosa (African azalea).